The following is a 254-amino-acid chain: Probable transcriptional regulatory protein HDEF_0869 (254 aa).

The tract at residues 1–20 is disordered; the sequence is MAGHSKWANTKHRKAAQDAK.

Belongs to the TACO1 family.

Its subcellular location is the cytoplasm. The chain is Probable transcriptional regulatory protein HDEF_0869 from Hamiltonella defensa subsp. Acyrthosiphon pisum (strain 5AT).